The chain runs to 256 residues: Autophagy-related protein 40 (256 aa).

The signal sequence occupies residues 1 to 16 (MFNLILWPLFLLTSVA). The Lumenal portion of the chain corresponds to 17-67 (IPLQLTLEVVYLTSSVDFSKASAAKTATSLGQSPVVITIYKSLLKYWSLYE). A helical membrane pass occupies residues 68-88 (FIHFIYLYTPIDAFLNFLPFT). Residues 89–256 (SLLMSFGSIC…DILDETTELD (168 aa)) are Cytoplasmic-facing. Positions 197–243 (QPQGDKNRYQNGDRESTKNGAAYQKSSQQSSSFEQNFTSTEFPNDYD) are disordered. Positions 199-213 (QGDKNRYQNGDREST) are enriched in basic and acidic residues. The span at 222 to 238 (SSQQSSSFEQNFTSTEF) shows a compositional bias: low complexity. The short motif at 242-245 (YDFM) is the ATG8-binding element.

Interacts with ATG8 and ATG11.

It is found in the endoplasmic reticulum membrane. Its subcellular location is the preautophagosomal structure membrane. Functionally, acts as a receptor for reticulophagy. Directs autophagic sequestration of folded tubules/sheets derived from the cortical endoplasmic reticulum (cER) and the cytoplasmic endoplasmic reticulum (cytoER) into autophagosomes. Is not required for the cytoplasm-to-vacuole targeting pathway, mitophagy, pexophagy, and non-selective autophagy. This Saccharomyces cerevisiae (strain ATCC 204508 / S288c) (Baker's yeast) protein is Autophagy-related protein 40.